The chain runs to 316 residues: Serpentine receptor class delta-48 (316 aa).

A run of 7 helical transmembrane segments spans residues 8–28 (FFYI…IFVI), 42–62 (FLLC…LLQL), 89–109 (LFYV…FITI), 127–147 (VVII…QIDL), 185–205 (FLLT…GFFI), 236–256 (TLQS…YFVV), and 269–289 (ILPV…LYSV).

It belongs to the nematode receptor-like protein srd family.

Its subcellular location is the membrane. This chain is Serpentine receptor class delta-48 (srd-48), found in Caenorhabditis elegans.